A 490-amino-acid polypeptide reads, in one-letter code: Adenylosuccinate synthetase 1, chloroplastic (490 aa).

Residues 1-47 (MSLSTLSHPAAAAAAATGSGKSHFRTAPAAQSVRFPKARPPVPAAVS) constitute a chloroplast transit peptide. Positions 14–36 (AAATGSGKSHFRTAPAAQSVRFP) are disordered. Residues 77 to 83 (GDEGKGK) and 105 to 107 (GHT) contribute to the GTP site. Catalysis depends on Asp-78, which acts as the Proton acceptor. Residues Asp-78 and Gly-105 each coordinate Mg(2+). IMP-binding positions include 78–81 (DEGK), 103–106 (NAGH), Thr-195, Arg-209, Gln-289, Thr-304, and Arg-368. The active-site Proton donor is His-106. Substrate is bound at residue 364–370 (TTTGRPR). GTP-binding positions include Arg-370, 396–398 (KLD), and 479–481 (GVG).

It belongs to the adenylosuccinate synthetase family. As to quaternary structure, homodimer. Requires Mg(2+) as cofactor.

Its subcellular location is the plastid. The protein localises to the chloroplast. It carries out the reaction IMP + L-aspartate + GTP = N(6)-(1,2-dicarboxyethyl)-AMP + GDP + phosphate + 2 H(+). It participates in purine metabolism; AMP biosynthesis via de novo pathway; AMP from IMP: step 1/2. Functionally, plays an important role in the de novo pathway and in the salvage pathway of purine nucleotide biosynthesis. Catalyzes the first committed step in the biosynthesis of AMP from IMP. This is Adenylosuccinate synthetase 1, chloroplastic from Sorghum bicolor (Sorghum).